Consider the following 330-residue polypeptide: Aspartate--ammonia ligase (330 aa).

Belongs to the class-II aminoacyl-tRNA synthetase family. AsnA subfamily.

Its subcellular location is the cytoplasm. It catalyses the reaction L-aspartate + NH4(+) + ATP = L-asparagine + AMP + diphosphate + H(+). The protein operates within amino-acid biosynthesis; L-asparagine biosynthesis; L-asparagine from L-aspartate (ammonia route): step 1/1. The protein is Aspartate--ammonia ligase of Escherichia fergusonii (strain ATCC 35469 / DSM 13698 / CCUG 18766 / IAM 14443 / JCM 21226 / LMG 7866 / NBRC 102419 / NCTC 12128 / CDC 0568-73).